The primary structure comprises 215 residues: MNQTLLEQFGNARERVEKGLQALRDGQGVLVADDENRENEGDLIFSAESLTEAQMAMLIRECSGIVCLCMPDEKIRSLELPMMVEDNSSRYGTAFTVSIEAAQGVTTGVSAKDRVTTVKTAAADGAKPADLSKPGHVFPLRARPGGVLERRGHTEATVDMMRLAGLKNPCGVLCELTNPDGTMARLPQLADFAKKHGMVLLTVEDLAAYRESQEN.

D-ribulose 5-phosphate contacts are provided by residues 37–38, D42, 150–154, and E175; these read RE and RRGHT. E38 lines the Mg(2+) pocket. H153 contacts Mg(2+).

It belongs to the DHBP synthase family. As to quaternary structure, homodimer. Mg(2+) serves as cofactor. Mn(2+) is required as a cofactor.

It catalyses the reaction D-ribulose 5-phosphate = (2S)-2-hydroxy-3-oxobutyl phosphate + formate + H(+). It functions in the pathway cofactor biosynthesis; riboflavin biosynthesis; 2-hydroxy-3-oxobutyl phosphate from D-ribulose 5-phosphate: step 1/1. Its function is as follows. Catalyzes the conversion of D-ribulose 5-phosphate to formate and 3,4-dihydroxy-2-butanone 4-phosphate. The polypeptide is 3,4-dihydroxy-2-butanone 4-phosphate synthase (Desulfatibacillum aliphaticivorans).